Here is a 425-residue protein sequence, read N- to C-terminus: Serine--tRNA ligase (425 aa).

Residue 227–229 coordinates L-serine; sequence TAE. Residues 258 to 260 and Val274 each bind ATP; that span reads RRE. Residue Glu281 participates in L-serine binding. 347-350 lines the ATP pocket; sequence ETHS. Thr382 lines the L-serine pocket.

This sequence belongs to the class-II aminoacyl-tRNA synthetase family. Type-1 seryl-tRNA synthetase subfamily. Homodimer. The tRNA molecule binds across the dimer.

Its subcellular location is the cytoplasm. It carries out the reaction tRNA(Ser) + L-serine + ATP = L-seryl-tRNA(Ser) + AMP + diphosphate + H(+). The enzyme catalyses tRNA(Sec) + L-serine + ATP = L-seryl-tRNA(Sec) + AMP + diphosphate + H(+). It participates in aminoacyl-tRNA biosynthesis; selenocysteinyl-tRNA(Sec) biosynthesis; L-seryl-tRNA(Sec) from L-serine and tRNA(Sec): step 1/1. Functionally, catalyzes the attachment of serine to tRNA(Ser). Is also able to aminoacylate tRNA(Sec) with serine, to form the misacylated tRNA L-seryl-tRNA(Sec), which will be further converted into selenocysteinyl-tRNA(Sec). In Deinococcus radiodurans (strain ATCC 13939 / DSM 20539 / JCM 16871 / CCUG 27074 / LMG 4051 / NBRC 15346 / NCIMB 9279 / VKM B-1422 / R1), this protein is Serine--tRNA ligase.